The sequence spans 490 residues: N-succinylglutamate 5-semialdehyde dehydrogenase (490 aa).

Residue 223–228 (GSAGTG) coordinates NAD(+). Catalysis depends on residues Glu-246 and Cys-280.

The protein belongs to the aldehyde dehydrogenase family. AstD subfamily.

The catalysed reaction is N-succinyl-L-glutamate 5-semialdehyde + NAD(+) + H2O = N-succinyl-L-glutamate + NADH + 2 H(+). The protein operates within amino-acid degradation; L-arginine degradation via AST pathway; L-glutamate and succinate from L-arginine: step 4/5. Its function is as follows. Catalyzes the NAD-dependent reduction of succinylglutamate semialdehyde into succinylglutamate. In Serratia proteamaculans (strain 568), this protein is N-succinylglutamate 5-semialdehyde dehydrogenase.